A 267-amino-acid chain; its full sequence is Auxin-responsive protein IAA18 (267 aa).

The EAR-like (transcriptional repression) signature appears at 42–46; it reads LELKL. Residues 81-101 form a disordered region; the sequence is PSSTKTTSHKRTAPGPVVGWP. The PB1 domain maps to 149-248; sequence GMFVKINMYG…SVKRLRVIKT (100 aa).

This sequence belongs to the Aux/IAA family. As to quaternary structure, homodimers and heterodimers. Interacts with TPL.

It is found in the nucleus. In terms of biological role, aux/IAA proteins are short-lived transcriptional factors that function as repressors of early auxin response genes at low auxin concentrations. Repression is thought to result from the interaction with auxin response factors (ARFs), proteins that bind to the auxin-responsive promoter element (AuxRE). Formation of heterodimers with ARF proteins may alter their ability to modulate early auxin response genes expression. The chain is Auxin-responsive protein IAA18 (IAA18) from Arabidopsis thaliana (Mouse-ear cress).